The following is a 331-amino-acid chain: UDP-N-acetylenolpyruvoylglucosamine reductase (331 aa).

The FAD-binding PCMH-type domain maps to 54 to 221 (RVGGAAELYV…TQATFQLQPG (168 aa)). R200 is a catalytic residue. The active-site Proton donor is the S251. Residue E321 is part of the active site.

The protein belongs to the MurB family. Requires FAD as cofactor.

It localises to the cytoplasm. It carries out the reaction UDP-N-acetyl-alpha-D-muramate + NADP(+) = UDP-N-acetyl-3-O-(1-carboxyvinyl)-alpha-D-glucosamine + NADPH + H(+). It functions in the pathway cell wall biogenesis; peptidoglycan biosynthesis. Cell wall formation. The chain is UDP-N-acetylenolpyruvoylglucosamine reductase from Trichormus variabilis (strain ATCC 29413 / PCC 7937) (Anabaena variabilis).